A 484-amino-acid polypeptide reads, in one-letter code: uncharacterized protein (484 aa).

This sequence to M.thermoautotrophicum MTH1153.

This is an uncharacterized protein from Methanocaldococcus jannaschii (strain ATCC 43067 / DSM 2661 / JAL-1 / JCM 10045 / NBRC 100440) (Methanococcus jannaschii).